The sequence spans 226 residues: Clarin-3 (226 aa).

The chain crosses the membrane as a helical span at residues 8–28 (LMFLSGFLTSLGSVVVICSIL). Residues Asn46 and Asn83 are each glycosylated (N-linked (GlcNAc...) asparagine). 3 helical membrane passes run 92–112 (VVII…MFTF), 128–148 (GVYT…VLFV), and 181–201 (FWLI…IIFY).

The protein belongs to the clarin family.

Its subcellular location is the membrane. The sequence is that of Clarin-3 (Clrn3) from Rattus norvegicus (Rat).